Reading from the N-terminus, the 203-residue chain is Ribosome-binding factor A (203 aa).

A compositionally biased stretch (basic and acidic residues) spans 119 to 141; it reads LAEVRRDARPAGDEDPYRRPRTV. A disordered region spans residues 119–203; sequence LAEVRRDARP…SPGGDPTAGR (85 aa). The span at 142-169 shows a compositional bias: acidic residues; the sequence is DEDDEDEDEDLVDEFDEFDRVEELDADA.

The protein belongs to the RbfA family. As to quaternary structure, monomer. Binds 30S ribosomal subunits, but not 50S ribosomal subunits or 70S ribosomes.

The protein resides in the cytoplasm. One of several proteins that assist in the late maturation steps of the functional core of the 30S ribosomal subunit. Associates with free 30S ribosomal subunits (but not with 30S subunits that are part of 70S ribosomes or polysomes). Required for efficient processing of 16S rRNA. May interact with the 5'-terminal helix region of 16S rRNA. This Frankia alni (strain DSM 45986 / CECT 9034 / ACN14a) protein is Ribosome-binding factor A.